A 359-amino-acid polypeptide reads, in one-letter code: Probable dual-specificity RNA methyltransferase RlmN (359 aa).

Catalysis depends on glutamate 91, which acts as the Proton acceptor. The Radical SAM core domain occupies 97–329; it reads QHYGHSVCVT…KKNGVNCVVR (233 aa). A disulfide bond links cysteine 104 and cysteine 340. [4Fe-4S] cluster is bound by residues cysteine 111, cysteine 115, and cysteine 118. Residues 163–164, serine 195, 218–220, and asparagine 296 contribute to the S-adenosyl-L-methionine site; these read GE and SLH. Catalysis depends on cysteine 340, which acts as the S-methylcysteine intermediate.

It belongs to the radical SAM superfamily. RlmN family. The cofactor is [4Fe-4S] cluster.

It is found in the cytoplasm. It carries out the reaction adenosine(2503) in 23S rRNA + 2 reduced [2Fe-2S]-[ferredoxin] + 2 S-adenosyl-L-methionine = 2-methyladenosine(2503) in 23S rRNA + 5'-deoxyadenosine + L-methionine + 2 oxidized [2Fe-2S]-[ferredoxin] + S-adenosyl-L-homocysteine. The enzyme catalyses adenosine(37) in tRNA + 2 reduced [2Fe-2S]-[ferredoxin] + 2 S-adenosyl-L-methionine = 2-methyladenosine(37) in tRNA + 5'-deoxyadenosine + L-methionine + 2 oxidized [2Fe-2S]-[ferredoxin] + S-adenosyl-L-homocysteine. Specifically methylates position 2 of adenine 2503 in 23S rRNA and position 2 of adenine 37 in tRNAs. The protein is Probable dual-specificity RNA methyltransferase RlmN of Streptococcus pyogenes serotype M5 (strain Manfredo).